The chain runs to 38 residues: Defensin-1 (38 aa).

Cystine bridges form between cysteine 4–cysteine 25, cysteine 11–cysteine 33, and cysteine 15–cysteine 35.

The protein localises to the secreted. Its function is as follows. Has antibacterial activity against the Gram-positive bacteria L.lactis and S.aureus, and against the Gram-negative bacteria E.coli D32 and V.parahemolyticus. This is Defensin-1 from Crassostrea virginica (Eastern oyster).